Reading from the N-terminus, the 777-residue chain is Subtilisin-like protease SBT3.3 (777 aa).

The signal sequence occupies residues 1 to 24; sequence MRSFRSSILLVLLSLITVLNATRA. Residues 25–111 constitute a propeptide, removed in mature form; it reads RSETESKVHI…VIPDGFHELA (87 aa). The Inhibitor I9 domain occupies 32 to 109; sequence VHIVYLGEKK…VHVIPDGFHE (78 aa). The Peptidase S8 domain occupies 115–624; it reads TWEYLGLSSA…GGIVNPEKAA (510 aa). A glycan (N-linked (GlcNAc...) asparagine) is linked at N131. D145 serves as the catalytic Charge relay system. N204 carries N-linked (GlcNAc...) asparagine glycosylation. H220 functions as the Charge relay system in the catalytic mechanism. 5 N-linked (GlcNAc...) asparagine glycosylation sites follow: N235, N397, N412, N508, and N540. Residues 403–481 enclose the PA domain; that stretch reads VCESLNLNPN…ELGTDILSYI (79 aa). S555 functions as the Charge relay system in the catalytic mechanism. N647 carries N-linked (GlcNAc...) asparagine glycosylation.

The protein belongs to the peptidase S8 family.

The protein localises to the secreted. The protein resides in the extracellular space. It localises to the extracellular matrix. Serine protease that plays a role in the control of the establishment of immune priming and systemic induced resistance. This is Subtilisin-like protease SBT3.3 from Arabidopsis thaliana (Mouse-ear cress).